Here is a 628-residue protein sequence, read N- to C-terminus: Kinesin-like protein KIN-10B (628 aa).

Positions 20–340 (NVRVVLRVRP…VSLAARSRHI (321 aa)) constitute a Kinesin motor domain. 114 to 121 (GATGSGKT) lines the ATP pocket. Positions 496–519 (SPIDSNAKPNSAHGSSPFLKPMTP) are disordered. The segment covering 498 to 509 (IDSNAKPNSAHG) has biased composition (polar residues).

The protein belongs to the TRAFAC class myosin-kinesin ATPase superfamily. Kinesin family. KIN-10 subfamily.

This Arabidopsis thaliana (Mouse-ear cress) protein is Kinesin-like protein KIN-10B.